Here is a 250-residue protein sequence, read N- to C-terminus: tRNA pseudouridine synthase A (250 aa).

Aspartate 52 (nucleophile) is an active-site residue. Residue tyrosine 110 coordinates substrate.

The protein belongs to the tRNA pseudouridine synthase TruA family. In terms of assembly, homodimer.

The catalysed reaction is uridine(38/39/40) in tRNA = pseudouridine(38/39/40) in tRNA. Functionally, formation of pseudouridine at positions 38, 39 and 40 in the anticodon stem and loop of transfer RNAs. The protein is tRNA pseudouridine synthase A of Citrifermentans bemidjiense (strain ATCC BAA-1014 / DSM 16622 / JCM 12645 / Bem) (Geobacter bemidjiensis).